A 141-amino-acid polypeptide reads, in one-letter code: Large ribosomal subunit protein uL14m (141 aa).

A mitochondrion-targeting transit peptide spans 1–19; the sequence is MALSLSGLILPKLMQQRAF.

Belongs to the universal ribosomal protein uL14 family. As to quaternary structure, component of the mitochondrial ribosome large subunit (39S) which comprises a 16S rRNA and about 50 distinct proteins. Interacts with MALSU1.

The protein localises to the mitochondrion. May form part of 2 intersubunit bridges in the assembled ribosome. Upon binding to MALSU1, intersubunit bridge formation is blocked, preventing ribosome formation and repressing translation. In Danio rerio (Zebrafish), this protein is Large ribosomal subunit protein uL14m (mrpl14).